The following is a 65-amino-acid chain: Putative beta-neurotoxin RjAa8 (65 aa).

One can recognise an LCN-type CS-alpha/beta domain in the interval 1 to 64 (KEGYPMGRDG…VWDSSTNKCG (64 aa)). Intrachain disulfides connect cysteine 11/cysteine 63, cysteine 15/cysteine 37, cysteine 22/cysteine 44, and cysteine 26/cysteine 46.

It belongs to the long (4 C-C) scorpion toxin superfamily. Sodium channel inhibitor family. Beta subfamily. Expressed by the venom gland.

It is found in the secreted. Its function is as follows. Beta toxins bind voltage-independently at site-4 of sodium channels (Nav) and shift the voltage of activation toward more negative potentials thereby affecting sodium channel activation and promoting spontaneous and repetitive firing. In Rhopalurus junceus (Caribbean blue scorpion), this protein is Putative beta-neurotoxin RjAa8.